We begin with the raw amino-acid sequence, 338 residues long: Aspartate carbamoyltransferase catalytic subunit (338 aa).

Residues R72 and T73 each contribute to the carbamoyl phosphate site. K100 contacts L-aspartate. Carbamoyl phosphate-binding residues include R122, H152, and Q155. The L-aspartate site is built by R186 and R243. Residues G284 and P285 each coordinate carbamoyl phosphate.

It belongs to the aspartate/ornithine carbamoyltransferase superfamily. ATCase family. Heterododecamer (2C3:3R2) of six catalytic PyrB chains organized as two trimers (C3), and six regulatory PyrI chains organized as three dimers (R2).

The catalysed reaction is carbamoyl phosphate + L-aspartate = N-carbamoyl-L-aspartate + phosphate + H(+). It functions in the pathway pyrimidine metabolism; UMP biosynthesis via de novo pathway; (S)-dihydroorotate from bicarbonate: step 2/3. Its function is as follows. Catalyzes the condensation of carbamoyl phosphate and aspartate to form carbamoyl aspartate and inorganic phosphate, the committed step in the de novo pyrimidine nucleotide biosynthesis pathway. This chain is Aspartate carbamoyltransferase catalytic subunit, found in Acinetobacter baumannii (strain SDF).